We begin with the raw amino-acid sequence, 267 residues long: MTVWQAIVLGIVQGLTEPLPVSSSAHLALTPYFLGWSDPGLAFDVALHFGTLLALIWYFRREWLEMIASAWRIARTRRVETVHDRRVLYLIAATIPGGIGGLLLNDLAETTFRSPVVIATSLIVMGILLWAVDRWSARARVLEEVTLRDAIIVGCAQVLALVPGVSRSGSTMTAGRLLKLDRPSVARFSFLMSMPITLAAVIVKMPDAVREHGASLPLLAGVAAAAVSSWFAISVLLRYVARHSFGVFAVYRVLLGIVVFATLASRT.

A run of 7 helical transmembrane segments spans residues 39-59 (PGLA…IWYF), 87-107 (VLYL…LNDL), 112-132 (FRSP…LWAV), 145-165 (VTLR…VPGV), 183-203 (PSVA…AVIV), 216-236 (LPLL…ISVL), and 244-264 (SFGV…ATLA).

Belongs to the UppP family.

The protein localises to the cell inner membrane. The catalysed reaction is di-trans,octa-cis-undecaprenyl diphosphate + H2O = di-trans,octa-cis-undecaprenyl phosphate + phosphate + H(+). Catalyzes the dephosphorylation of undecaprenyl diphosphate (UPP). Confers resistance to bacitracin. In Gemmatimonas aurantiaca (strain DSM 14586 / JCM 11422 / NBRC 100505 / T-27), this protein is Undecaprenyl-diphosphatase.